A 157-amino-acid polypeptide reads, in one-letter code: Large ribosomal subunit protein bL17 (157 aa).

The interval Ala-124–Glu-157 is disordered.

The protein belongs to the bacterial ribosomal protein bL17 family. Part of the 50S ribosomal subunit. Contacts protein L32.

This is Large ribosomal subunit protein bL17 from Chlorobaculum tepidum (strain ATCC 49652 / DSM 12025 / NBRC 103806 / TLS) (Chlorobium tepidum).